Reading from the N-terminus, the 301-residue chain is Acidic endochitinase (301 aa).

The signal sequence occupies residues methionine 1–alanine 25. One can recognise a GH18 domain in the interval glycine 26–valine 301. 2 disulfide bridges follow: cysteine 45/cysteine 92 and cysteine 75/cysteine 82. The active-site Proton donor is the glutamate 152. Cysteine 187 and cysteine 216 form a disulfide bridge.

The protein belongs to the glycosyl hydrolase 18 family. Chitinase class II subfamily.

It catalyses the reaction Random endo-hydrolysis of N-acetyl-beta-D-glucosaminide (1-&gt;4)-beta-linkages in chitin and chitodextrins.. Its function is as follows. Defense against chitin containing fungal pathogens. The sequence is that of Acidic endochitinase (CHIT3) from Vitis vinifera (Grape).